A 208-amino-acid polypeptide reads, in one-letter code: Thymidylate kinase (208 aa).

10–17 (GPEGSGKT) serves as a coordination point for ATP.

The protein belongs to the thymidylate kinase family.

The enzyme catalyses dTMP + ATP = dTDP + ADP. Its function is as follows. Phosphorylation of dTMP to form dTDP in both de novo and salvage pathways of dTTP synthesis. The polypeptide is Thymidylate kinase (Bacillus cereus (strain AH187)).